The primary structure comprises 265 residues: 3-methyl-2-oxobutanoate hydroxymethyltransferase (265 aa).

2 residues coordinate Mg(2+): aspartate 44 and aspartate 83. 3-methyl-2-oxobutanoate contacts are provided by residues 44-45, aspartate 83, and lysine 113; that span reads DS. Residue glutamate 115 coordinates Mg(2+). The Proton acceptor role is filled by glutamate 182.

This sequence belongs to the PanB family. As to quaternary structure, homodecamer; pentamer of dimers. Requires Mg(2+) as cofactor.

The protein resides in the cytoplasm. The catalysed reaction is 3-methyl-2-oxobutanoate + (6R)-5,10-methylene-5,6,7,8-tetrahydrofolate + H2O = 2-dehydropantoate + (6S)-5,6,7,8-tetrahydrofolate. Its pathway is cofactor biosynthesis; (R)-pantothenate biosynthesis; (R)-pantoate from 3-methyl-2-oxobutanoate: step 1/2. Its function is as follows. Catalyzes the reversible reaction in which hydroxymethyl group from 5,10-methylenetetrahydrofolate is transferred onto alpha-ketoisovalerate to form ketopantoate. This chain is 3-methyl-2-oxobutanoate hydroxymethyltransferase, found in Aquifex aeolicus (strain VF5).